The chain runs to 145 residues: 3-dehydroquinate dehydratase (145 aa).

Residue tyrosine 24 is the Proton acceptor of the active site. Substrate is bound by residues asparagine 75, histidine 81, and aspartate 88. Residue histidine 101 is the Proton donor of the active site. Residues 102–103 and arginine 112 each bind substrate; that span reads IS.

Belongs to the type-II 3-dehydroquinase family. As to quaternary structure, homododecamer.

It carries out the reaction 3-dehydroquinate = 3-dehydroshikimate + H2O. The protein operates within metabolic intermediate biosynthesis; chorismate biosynthesis; chorismate from D-erythrose 4-phosphate and phosphoenolpyruvate: step 3/7. Its function is as follows. Catalyzes a trans-dehydration via an enolate intermediate. The chain is 3-dehydroquinate dehydratase from Rhizobium johnstonii (strain DSM 114642 / LMG 32736 / 3841) (Rhizobium leguminosarum bv. viciae).